We begin with the raw amino-acid sequence, 313 residues long: Trimeric intracellular cation channel type 1B.2 (313 aa).

At 1 to 28 (MGWVPDEWSIDHDTLIDAGGYVQKLKLY) the chain is on the lumenal side. Residues 29–48 (PYFDAAHYVLTCLSVRHDLG) form a helical membrane-spanning segment. Residues 49–57 (PDAISFSRK) are Cytoplasmic-facing. Residues 58–82 (HPFSCWLSCMLMSFAGSFLSCFLLG) form a discontinuously helical membrane-spanning segment. Residues 83–90 (EPIISPLK) are Lumenal-facing. The helical transmembrane segment at 91–108 (QHADILLGSIVWYLVFYS) threads the bilayer. At 109-118 (PFDVVFRLAT) the chain is on the cytoplasmic side. A helical transmembrane segment spans residues 119–149 (WFPVKLGLSVLKEVQRTHKIAAGVKHAVRIY). Positions 130 and 134 each coordinate a 1,2-diacyl-sn-glycero-3-phospho-(1D-myo-inositol-4,5-bisphosphate). The Lumenal segment spans residues 150–151 (PE). A discontinuously helical transmembrane segment spans residues 152–178 (SYLVQILVGVAKGAGSGVVKIVEQLAR). Glycine 168 provides a ligand contact to a 1,2-diacyl-sn-glycero-3-phospho-(1D-myo-inositol-4,5-bisphosphate). The Cytoplasmic portion of the chain corresponds to 179 to 192 (GTWHPTNHEILRPS). Residues 193 to 210 (FTTKACVIASIVFTLERH) traverse the membrane as a helical segment. At 211–216 (SMYVTA) the chain is on the lumenal side. A helical transmembrane segment spans residues 217–239 (PHDLVYLCVVGFFIYFKLASLCL). Over 240-313 (SVHDVLMPIE…MSNGTDKKNN (74 aa)) the chain is Cytoplasmic.

This sequence belongs to the TMEM38 family. As to quaternary structure, homotrimer; trimerization probably requires binding to phosphatidylinositol 4,5-bisphosphate (PIP2).

Its subcellular location is the endoplasmic reticulum membrane. Functionally, potassium channel that mediates transmembrane potassium transport. Might be required for maintenance of rapid intracellular calcium release. May act as a potassium counter-ion channel that functions in synchronization with calcium release from intracellular stores. Binds phosphatidylinositol 4,5-bisphosphate (PIP2). The polypeptide is Trimeric intracellular cation channel type 1B.2 (Caenorhabditis elegans).